Here is a 128-residue protein sequence, read N- to C-terminus: UPF0212 protein TGAM_1344 (128 aa).

This sequence belongs to the UPF0212 family.

In Thermococcus gammatolerans (strain DSM 15229 / JCM 11827 / EJ3), this protein is UPF0212 protein TGAM_1344.